Consider the following 289-residue polypeptide: Probable phosphoribulokinase (289 aa).

12 to 20 (GSSGAGTTT) provides a ligand contact to ATP.

Belongs to the phosphoribulokinase family.

The catalysed reaction is D-ribulose 5-phosphate + ATP = D-ribulose 1,5-bisphosphate + ADP + H(+). The protein is Probable phosphoribulokinase (prkB) of Escherichia coli (strain K12).